A 494-amino-acid chain; its full sequence is Cobyric acid synthase (494 aa).

Residues 248–444 enclose the GATase cobBQ-type domain; sequence EIEIAIIKLP…LHGIFENDEW (197 aa). Cysteine 329 serves as the catalytic Nucleophile. Histidine 436 is an active-site residue.

This sequence belongs to the CobB/CobQ family. CobQ subfamily.

It functions in the pathway cofactor biosynthesis; adenosylcobalamin biosynthesis. In terms of biological role, catalyzes amidations at positions B, D, E, and G on adenosylcobyrinic A,C-diamide. NH(2) groups are provided by glutamine, and one molecule of ATP is hydrogenolyzed for each amidation. The protein is Cobyric acid synthase of Prochlorococcus marinus (strain NATL1A).